The chain runs to 640 residues: MKITFPDGAVKEFEPGVSTADIAASISPGLKKKALAGKLNGELLDLVTPIHEDGAIEIVTPDHEDALGILRHSTAHLMAQALKRLYPDVKFGVGPAIESGFYYDIDTEAVISDESLVEIEKEMQKIVRENVPIEREVVSREEAIKRFKAIGDQYKLELIEAIPEDETVTIYTQGEFFDLCRGVHVPSTGKIQVFKLLSVAGAYWRGDSNNKMLQRIYGTAFFDKNGLKEFIQMQKEAKERDHRKLGKELDLFANSIEVGQGLPLWLPKGATIRRVIERYIVDKEERLGYNHVYTPIMANVELYKTSGHWDHYHEDMFPTMKMDNEELVLRPMNCPHHMMIYKNDIHSYRELPIRIAELGMMHRYEMSGALSGLQRVRGMTLNDAHVFVRPDQIKDEFKRVVELILEVYKDFDIKDYSFRLSYRDPKNTEKYFDDDAMWEKAQAMLKSAMDEMEMDYFEAEGEAAFYGPKLDVQVKTAIGKEETLSTVQLDFLLPERFDLTYIGEDGEKHRPVVIHRGVVSTMERFVAYLIEEYKGAFPTWLAPVQMELIPVNADAHLDYAKGVQDKLQRAGLRAEVDDRNEKLGYKIREAQTKKIPYALVLGDQEVEAGSVNVRRYGSKDSETMDLDAFIAQVVAEVSKY.

The TGS domain occupies 1-60; that stretch reads MKITFPDGAVKEFEPGVSTADIAASISPGLKKKALAGKLNGELLDLVTPIHEDGAIEIVT. Positions 241–538 are catalytic; the sequence is DHRKLGKELD…LIEEYKGAFP (298 aa). Cysteine 334, histidine 385, and histidine 515 together coordinate Zn(2+).

It belongs to the class-II aminoacyl-tRNA synthetase family. In terms of assembly, homodimer. Requires Zn(2+) as cofactor.

Its subcellular location is the cytoplasm. It catalyses the reaction tRNA(Thr) + L-threonine + ATP = L-threonyl-tRNA(Thr) + AMP + diphosphate + H(+). In terms of biological role, catalyzes the attachment of threonine to tRNA(Thr) in a two-step reaction: L-threonine is first activated by ATP to form Thr-AMP and then transferred to the acceptor end of tRNA(Thr). Also edits incorrectly charged L-seryl-tRNA(Thr). This Listeria monocytogenes serotype 4b (strain CLIP80459) protein is Threonine--tRNA ligase.